The chain runs to 291 residues: Protein/nucleic acid deglycase HchA (291 aa).

Basic and acidic residues predominate over residues 1–18 (MSNERDTSRTPTPDHAEH). Positions 1-20 (MSNERDTSRTPTPDHAEHNA) are disordered. Cys188 functions as the Nucleophile in the catalytic mechanism.

Belongs to the peptidase C56 family. HchA subfamily.

The protein resides in the cytoplasm. The enzyme catalyses N(omega)-(1-hydroxy-2-oxopropyl)-L-arginyl-[protein] + H2O = lactate + L-arginyl-[protein] + H(+). It carries out the reaction N(6)-(1-hydroxy-2-oxopropyl)-L-lysyl-[protein] + H2O = lactate + L-lysyl-[protein] + H(+). It catalyses the reaction S-(1-hydroxy-2-oxopropyl)-L-cysteinyl-[protein] + H2O = lactate + L-cysteinyl-[protein] + H(+). The catalysed reaction is N(omega)-(1-hydroxy-2-oxoethyl)-L-arginyl-[protein] + H2O = L-arginyl-[protein] + glycolate + H(+). The enzyme catalyses N(6)-(1-hydroxy-2-oxoethyl)-L-lysyl-[protein] + H2O = glycolate + L-lysyl-[protein] + H(+). It carries out the reaction S-(1-hydroxy-2-oxoethyl)-L-cysteinyl-[protein] + H2O = glycolate + L-cysteinyl-[protein] + H(+). It catalyses the reaction N(2)-(1-hydroxy-2-oxopropyl)-dGTP + H2O = lactate + dGTP + H(+). The catalysed reaction is N(2)-(1-hydroxy-2-oxopropyl)-GTP + H2O = lactate + GTP + H(+). The enzyme catalyses N(2)-(1-hydroxy-2-oxopropyl)-GDP + H2O = lactate + GDP + H(+). It carries out the reaction N(2)-(1-hydroxy-2-oxopropyl)-GMP + H2O = lactate + GMP + H(+). It catalyses the reaction N(2)-(1-hydroxy-2-oxoethyl)-dGTP + H2O = dGTP + glycolate + H(+). The catalysed reaction is N(2)-(1-hydroxy-2-oxoethyl)-GTP + H2O = glycolate + GTP + H(+). The enzyme catalyses N(2)-(1-hydroxy-2-oxoethyl)-GDP + H2O = glycolate + GDP + H(+). It carries out the reaction N(2)-(1-hydroxy-2-oxoethyl)-GMP + H2O = glycolate + GMP + H(+). It catalyses the reaction an N(2)-(1-hydroxy-2-oxopropyl)-guanosine in RNA + H2O = a guanosine in RNA + lactate + H(+). The catalysed reaction is an N(2)-(1-hydroxy-2-oxopropyl)-2'-deoxyguanosine in DNA + H2O = a 2'-deoxyguanosine in DNA + lactate + H(+). The enzyme catalyses an N(2)-(1-hydroxy-2-oxoethyl)-guanosine in RNA + H2O = a guanosine in RNA + glycolate + H(+). It carries out the reaction an N(2)-(1-hydroxy-2-oxoethyl)-2'-deoxyguanosine in DNA + H2O = a 2'-deoxyguanosine in DNA + glycolate + H(+). Functionally, protein and nucleotide deglycase that catalyzes the deglycation of the Maillard adducts formed between amino groups of proteins or nucleotides and reactive carbonyl groups of glyoxals. Thus, functions as a protein deglycase that repairs methylglyoxal- and glyoxal-glycated proteins, and releases repaired proteins and lactate or glycolate, respectively. Deglycates cysteine, arginine and lysine residues in proteins, and thus reactivates these proteins by reversing glycation by glyoxals. Acts on early glycation intermediates (hemithioacetals and aminocarbinols), preventing the formation of Schiff bases and advanced glycation endproducts (AGE). Also functions as a nucleotide deglycase able to repair glycated guanine in the free nucleotide pool (GTP, GDP, GMP, dGTP) and in DNA and RNA. Is thus involved in a major nucleotide repair system named guanine glycation repair (GG repair), dedicated to reversing methylglyoxal and glyoxal damage via nucleotide sanitization and direct nucleic acid repair. Plays an important role in protecting cells from carbonyl stress. This chain is Protein/nucleic acid deglycase HchA, found in Pseudomonas aeruginosa (strain LESB58).